Consider the following 160-residue polypeptide: 6,7-dimethyl-8-ribityllumazine synthase (160 aa).

5-amino-6-(D-ribitylamino)uracil contacts are provided by residues Trp-27, 59–61 (AIE), and 81–83 (VVI). 86–87 (QT) provides a ligand contact to (2S)-2-hydroxy-3-oxobutyl phosphate. Residue His-89 is the Proton donor of the active site. Asn-114 is a binding site for 5-amino-6-(D-ribitylamino)uracil. Arg-128 is a binding site for (2S)-2-hydroxy-3-oxobutyl phosphate.

The protein belongs to the DMRL synthase family. As to quaternary structure, homopentamer.

The catalysed reaction is (2S)-2-hydroxy-3-oxobutyl phosphate + 5-amino-6-(D-ribitylamino)uracil = 6,7-dimethyl-8-(1-D-ribityl)lumazine + phosphate + 2 H2O + H(+). It participates in cofactor biosynthesis; riboflavin biosynthesis; riboflavin from 2-hydroxy-3-oxobutyl phosphate and 5-amino-6-(D-ribitylamino)uracil: step 1/2. Its function is as follows. Catalyzes the formation of 6,7-dimethyl-8-ribityllumazine by condensation of 5-amino-6-(D-ribitylamino)uracil with 3,4-dihydroxy-2-butanone 4-phosphate. This is the penultimate step in the biosynthesis of riboflavin. This chain is 6,7-dimethyl-8-ribityllumazine synthase, found in Mycolicibacterium paratuberculosis (strain ATCC BAA-968 / K-10) (Mycobacterium paratuberculosis).